A 95-amino-acid polypeptide reads, in one-letter code: Exodeoxyribonuclease 7 small subunit (95 aa).

Residues 62–83 are compositionally biased toward basic and acidic residues; sequence LTKDESKKTNKTGFRGESKTTE. The interval 62–95 is disordered; that stretch reads LTKDESKKTNKTGFRGESKTTETKNNTAQEEDLF.

This sequence belongs to the XseB family. In terms of assembly, heterooligomer composed of large and small subunits.

The protein localises to the cytoplasm. It carries out the reaction Exonucleolytic cleavage in either 5'- to 3'- or 3'- to 5'-direction to yield nucleoside 5'-phosphates.. Bidirectionally degrades single-stranded DNA into large acid-insoluble oligonucleotides, which are then degraded further into small acid-soluble oligonucleotides. This Leptospira interrogans serogroup Icterohaemorrhagiae serovar copenhageni (strain Fiocruz L1-130) protein is Exodeoxyribonuclease 7 small subunit.